Reading from the N-terminus, the 374-residue chain is Tryptophan--tRNA ligase (374 aa).

Residues 81-89 (PSGPVHIGH) carry the 'HIGH' region motif. Residues 258 to 262 (KMSAS) carry the 'KMSKS' region motif.

This sequence belongs to the class-I aminoacyl-tRNA synthetase family.

It localises to the cytoplasm. The catalysed reaction is tRNA(Trp) + L-tryptophan + ATP = L-tryptophyl-tRNA(Trp) + AMP + diphosphate + H(+). This chain is Tryptophan--tRNA ligase, found in Pyrobaculum arsenaticum (strain DSM 13514 / JCM 11321 / PZ6).